Here is a 728-residue protein sequence, read N- to C-terminus: MDKTQSSQGKCPVMHGANSAVASNNMDWWPKALNLDILHQHDKKTDPMDPKFNYREAFNSLDLAAVKRDLNALMTDSQDWWPADWGHYGGLMIRMAWHSAGTYRVADGRGGAGTGNQRFAPLNSWPDNANLDKARRLLWPIKKKYGNKLSWADLMILAGNVAYESMGLKTYGFAGGREDIWHPEKDIYWGSEKQWLAPTENPNSRYSGERDLENPLAAVMMGLIYVNPEGVDGKPDPLRTAQDVRVTFARMAMNDEETVALTAGGHTVGKCHGNGKAQDLGPEPEGEDLEAQGLGWLNKKGPGIGANAVTSGLEGAWTTYPTQWDNGYFHLLLNYDWELKKSPAGASQWEPINIKEEDKVVSVGDPNRKFNPIMTDADMAMKMDPEYRKISEKFYQDPAYFSEVFARAWFKLTHRDLGPKSRYLGPEVPNEDLLWQDPIPSVDYRLDASEIVDLKAKLLASGLSVSELVATAWDSARTFRGSDFRGGANGARIRLAPQKDWQANEPERLQKVLKVLTELQASLSKKVSIADLIVLGGAAAIEKAAHEAGVKVTVPFIPGRGDATQEMTDVESFAVLEPLHDAYRNWQKKDYVVQPEEMMLDRTQLMGLTAHEMTVLVGGMRVLGTNYGGTRHGVFTDKVGVLTNDFFVNLTDMAYNWKPAGSNLYQIVERKTGAVKWTASRVDLVFGSNSILRAYAEMYAQDDAKEKFVHDFVAAWTKVMNADRFDLA.

The first 22 residues, 1-22 (MDKTQSSQGKCPVMHGANSAVA), serve as a signal peptide directing secretion. The segment at residues 97–225 (WHSAGTYRVA…LAAVMMGLIY (129 aa)) is a cross-link (tryptophyl-tyrosyl-methioninium (Trp-Tyr) (with M-251)). H98 functions as the Proton acceptor in the catalytic mechanism. A cross-link (tryptophyl-tyrosyl-methioninium (Tyr-Met) (with W-97)) is located at residues 225 to 251 (YVNPEGVDGKPDPLRTAQDVRVTFARM). H266 lines the heme b pocket.

This sequence belongs to the peroxidase family. Peroxidase/catalase subfamily. In terms of assembly, homodimer or homotetramer. Heme b is required as a cofactor. In terms of processing, formation of the three residue Trp-Tyr-Met cross-link is important for the catalase, but not the peroxidase activity of the enzyme.

The enzyme catalyses H2O2 + AH2 = A + 2 H2O. It catalyses the reaction 2 H2O2 = O2 + 2 H2O. Its function is as follows. Bifunctional enzyme with both catalase and broad-spectrum peroxidase activity. In Shewanella sp. (strain MR-4), this protein is Catalase-peroxidase 1.